Reading from the N-terminus, the 233-residue chain is DNA repair protein RecO (233 aa).

This sequence belongs to the RecO family.

Functionally, involved in DNA repair and RecF pathway recombination. In Pseudomonas aeruginosa (strain UCBPP-PA14), this protein is DNA repair protein RecO.